Consider the following 208-residue polypeptide: Small ribosomal subunit protein uS2 (208 aa).

Residues 189-208 are disordered; it reads KPDQDLPVPPEEFETKLVQS.

This sequence belongs to the universal ribosomal protein uS2 family.

The chain is Small ribosomal subunit protein uS2 (rps2) from Pyrobaculum aerophilum (strain ATCC 51768 / DSM 7523 / JCM 9630 / CIP 104966 / NBRC 100827 / IM2).